The primary structure comprises 144 residues: C-type isolectin Sp-CL4 (144 aa).

The C-type lectin domain occupies 27-144 (DENRKVKYFE…CSEKLPFMCA (118 aa)). Disulfide bonds link cysteine 48–cysteine 143 and cysteine 119–cysteine 135.

Belongs to the true venom lectin family. In terms of processing, glycosylated with a carbohydrate of 383 Da. Expressed by the venom gland.

Its subcellular location is the secreted. The role of this hemagglutinin in the venom is unknown, because it is masked by the high venom hemolytic activity. Lectin with specificity to galactose. Induces hemagglutination. The sequence is that of C-type isolectin Sp-CL4 from Scorpaena plumieri (Spotted scorpionfish).